A 266-amino-acid polypeptide reads, in one-letter code: Type 1 encapsulin shell protein (266 aa).

The protein belongs to the encapsulin family. Family 1 subfamily. In terms of assembly, homomultimeric. This encapsulin nanocompartment is formed by 60 subunits, and encloses one Dyp homohexamer; partially assembled 58-subunit compartments with and without cargo are also purified. May assemble the shell from dimers. Monomers form pentamers, which assemble to form hollow shells with pores 5-8 Angstroms in diameter where 3 pentamers meet.

Its subcellular location is the encapsulin nanocompartment. In terms of biological role, shell component of a type 1 encapsulin nanocompartment. Assembles into proteinaceous shells 23-24 nm in diameter with 2-2.5 nm thick walls. Endogenous cargo protein DyP (dye-decolorizing peroxidase) is targeted to the interior via its C-terminal extension; only 1 DyP hexamer is incorporated into each shell. Empty shells can be isolated in the absence of cargo. Cargo encapsulation probably precedes assembly of the nanocompartment; may assemble or disassemble via dimers, subcomplexes with a distinct preference for even numbers of subunits are detected. Nanocompartments are stable against mechanical forces; loaded nanocompartments are less stable than empty ones. Nanocompartments are stable between pH 5-10; they aggregate at pH 9-10 and start to disassemble at pH 11. They are stable in 1M NaCl, 1 M MgCl(2) and 1M CaCl(2), unstable in 20% DMSO (dimethylsulfoxide) and are stable in 20% but not 40% ethanol. This is Type 1 encapsulin shell protein from Brevibacterium linens.